The primary structure comprises 198 residues: Na(+)-translocating NADH-quinone reductase subunit E (198 aa).

6 helical membrane-spanning segments follow: residues 11–31, 35–55, 77–97, 110–130, 140–160, and 176–196; these read SVFI…FLAV, VSTA…AVPV, FLNF…LEMV, GIFL…SFMV, VVYG…LAGI, and LGIT…FSGI.

It belongs to the NqrDE/RnfAE family. In terms of assembly, composed of six subunits; NqrA, NqrB, NqrC, NqrD, NqrE and NqrF.

The protein localises to the cell inner membrane. The enzyme catalyses a ubiquinone + n Na(+)(in) + NADH + H(+) = a ubiquinol + n Na(+)(out) + NAD(+). NQR complex catalyzes the reduction of ubiquinone-1 to ubiquinol by two successive reactions, coupled with the transport of Na(+) ions from the cytoplasm to the periplasm. NqrA to NqrE are probably involved in the second step, the conversion of ubisemiquinone to ubiquinol. This Pasteurella multocida (strain Pm70) protein is Na(+)-translocating NADH-quinone reductase subunit E.